Consider the following 519-residue polypeptide: Seed lectin (519 aa).

Cystine bridges form between Cys-249–Cys-258 and Cys-274–Cys-293. 2 Ricin B-type lectin domains span residues 261–387 and 390–518; these read ETRT…WRVG and VQPI…WVLF. A 1-alpha repeat occupies 271-311; the sequence is DALCVDVAGALTSDGSRLILYPCGQQVNQKWTFHSDGTVRS. Residues 276–279 and 296–298 contribute to the a carbohydrate site; these read DVAG and QVN. A 1-beta repeat occupies 312–352; sequence LGKCLATNNSKFGNLVVIYDCSKLAAEDISWDVSVGGTIMN. The cysteines at positions 315 and 332 are disulfide-linked. A 1-gamma repeat occupies 356 to 388; sequence EDLALTSNKATRSTNLTMEVNTYSASQGWRVGN. N-linked (GlcNAc...) asparagine glycosylation is present at Asn-370. One copy of the 2-alpha repeat lies at 401–438; sequence DDMCLEATDGNTNMWLEECVPNQREQSWALYSDGTIRV. Disulfide bonds link Cys-404–Cys-419 and Cys-445–Cys-464. A 2-beta repeat occupies 442-482; it reads RELCVTASSSTYDNWKVITILNCDGSNNQRWVFLADGSIST. Residues Asp-454, 491 to 494, 505 to 508, and Asn-512 each bind a carbohydrate; these read DVAR and HRPH. The 2-gamma repeat unit spans residues 486–513; sequence QRLAMDVARSDVDLKKIILHRPHGDLNQ.

It in the N-terminal section; belongs to the ribosome-inactivating protein family. Type 2 RIP subfamily. As to quaternary structure, heterotrimer consisting of Aalpha, Abeta and B chains with Abeta and B being disulfide-linked.

Its function is as follows. Seed lectin similar to type 2 ribosome-inactivating proteins. The Aalpha and Abeta chains constitute the rRNA glycosidase domain and the B chain the carbohydrate-binding lectin domain. Is predicted to have no glycosidase activity and, hence, to be non-toxic, due to small changes in both the nucleotide binding and carbohydrate binding capabilities. Binds galactose and derivatives with a preference for the beta-anomeric forms. Binds prophyrins. Has hemagglutinating activity towards rabbit and human erythrocytes. This Trichosanthes anguina (Snake gourd) protein is Seed lectin.